The chain runs to 378 residues: Nucleosome assembly protein 1;1 (378 aa).

The stretch at 33–87 (VNALKDKLQSLAGQHTDVLEALSPNVRKRVEYLREIQGQHDEIELKFFEERAALE) forms a coiled coil. The short motif at 54-69 (LSPNVRKRVEYLREIQ) is the Nuclear export signal element. The Nuclear localization signal motif lies at 230–235 (KKKPKK). Residues 306–378 (AVQAEDFDDM…ADQPADCKQQ (73 aa)) form a disordered region. The segment covering 308–344 (QAEDFDDMEDDEEDDEDDDEDEEEEEEDEDEDEDDEE) has biased composition (acidic residues). The short motif at 348-352 (KPKKK) is the Nuclear localization signal element. Positions 356–378 (KPKLPSKGGAQGGADQPADCKQQ) are enriched in low complexity. At Cys-375 the chain carries Cysteine methyl ester. A lipid anchor (S-farnesyl cysteine) is attached at Cys-375. Positions 376-378 (KQQ) are cleaved as a propeptide — removed in mature form.

This sequence belongs to the nucleosome assembly protein (NAP) family.

The protein localises to the nucleus. The protein resides in the cytoplasm. Its function is as follows. May modulate chromatin structure by regulation of nucleosome assembly/disassembly. The polypeptide is Nucleosome assembly protein 1;1 (NAP1;1) (Oryza sativa subsp. japonica (Rice)).